The primary structure comprises 361 residues: Beta-hexosaminidase (361 aa).

Substrate-binding positions include aspartate 69, arginine 77, arginine 144, and 174–175 (KH). Catalysis depends on histidine 187, which acts as the Proton donor/acceptor. The active-site Nucleophile is aspartate 258.

The protein belongs to the glycosyl hydrolase 3 family. NagZ subfamily.

Its subcellular location is the cytoplasm. It catalyses the reaction Hydrolysis of terminal non-reducing N-acetyl-D-hexosamine residues in N-acetyl-beta-D-hexosaminides.. Its pathway is cell wall biogenesis; peptidoglycan recycling. Its function is as follows. Plays a role in peptidoglycan recycling by cleaving the terminal beta-1,4-linked N-acetylglucosamine (GlcNAc) from peptide-linked peptidoglycan fragments, giving rise to free GlcNAc, anhydro-N-acetylmuramic acid and anhydro-N-acetylmuramic acid-linked peptides. In Neisseria gonorrhoeae (strain ATCC 700825 / FA 1090), this protein is Beta-hexosaminidase.